The following is a 122-amino-acid chain: Basic phospholipase A2 LmTX-II (122 aa).

Intrachain disulfides connect cysteine 26/cysteine 115, cysteine 28/cysteine 44, cysteine 43/cysteine 95, cysteine 49/cysteine 122, cysteine 50/cysteine 88, and cysteine 75/cysteine 86. Tyrosine 27, glycine 29, and glycine 31 together coordinate Ca(2+). Histidine 47 is an active-site residue. Aspartate 48 contacts Ca(2+). Residue aspartate 89 is part of the active site.

In terms of assembly, monomer. Ca(2+) serves as cofactor. In terms of tissue distribution, expressed by the venom gland.

The protein localises to the secreted. It catalyses the reaction a 1,2-diacyl-sn-glycero-3-phosphocholine + H2O = a 1-acyl-sn-glycero-3-phosphocholine + a fatty acid + H(+). Functionally, snake venom phospholipase A2 (PLA2) that may display neurotoxic and myotoxic activities. May induce inflammatory edema by mechanisms involving mast cell activation and arachidonic acid metabolites. May increase plasma creatine kinase activity. PLA2 catalyzes the calcium-dependent hydrolysis of the 2-acyl groups in 3-sn-phosphoglycerides. This Lachesis muta muta (Bushmaster) protein is Basic phospholipase A2 LmTX-II.